A 798-amino-acid chain; its full sequence is Cation channel sperm-associated auxiliary subunit delta (798 aa).

A signal peptide spans Met1–Ala20. At Gln21–Gly723 the chain is on the extracellular side. Cystine bridges form between Cys23/Cys369, Cys59/Cys145, Cys144/Cys152, Cys387/Cys496, Cys510/Cys701, Cys525/Cys572, and Cys624/Cys652. N-linked (GlcNAc...) asparagine glycosylation is present at Asn123. N-linked (GlcNAc...) asparagine glycosylation is found at Asn230, Asn240, Asn472, Asn538, and Asn630. Residues Val724 to Lys745 traverse the membrane as a helical segment. Residues Leu746–His798 are Cytoplasmic-facing.

This sequence belongs to the CATSPERD family. In terms of assembly, component of the CatSper complex or CatSpermasome composed of the core pore-forming members CATSPER1, CATSPER2, CATSPER3 and CATSPER4 as well as auxiliary members CATSPERB, CATSPERG, CATSPERD, CATSPERE, CATSPERZ, C2CD6/CATSPERT, TMEM249, TMEM262 and EFCAB9. HSPA1 may be an additional auxiliary complex member. The core complex members CATSPER1, CATSPER2, CATSPER3 and CATSPER4 form a heterotetrameric channel. The auxiliary CATSPERB, CATSPERG, CATSPERD and CATSPERE subunits form a pavilion-like structure over the pore which stabilizes the complex through interactions with CATSPER4, CATSPER3, CATSPER1 and CATSPER2 respectively. TMEM262/CATSPERH interacts with CATSPERB, further stabilizing the complex. C2CD6/CATSPERT interacts at least with CATSPERD and is required for targeting the CatSper complex in the flagellar membrane.

It is found in the cell projection. Its subcellular location is the cilium. It localises to the flagellum membrane. Functionally, auxiliary component of the CatSper complex, a complex involved in sperm cell hyperactivation. Sperm cell hyperactivation is needed for sperm motility which is essential late in the preparation of sperm for fertilization. Required for CATSPER1 stability before intraflagellar transport and/or incorporation of the CatSper complex channel into the flagellar membrane. This chain is Cation channel sperm-associated auxiliary subunit delta, found in Homo sapiens (Human).